Here is a 273-residue protein sequence, read N- to C-terminus: Glutamate racemase (273 aa).

Substrate is bound by residues 19 to 20 and 51 to 52; these read DS and YG. Cysteine 83 acts as the Proton donor/acceptor in catalysis. 84–85 is a binding site for substrate; sequence NT. Cysteine 198 (proton donor/acceptor) is an active-site residue. 199 to 200 is a binding site for substrate; sequence TH.

It belongs to the aspartate/glutamate racemases family.

The enzyme catalyses L-glutamate = D-glutamate. The protein operates within cell wall biogenesis; peptidoglycan biosynthesis. Functionally, provides the (R)-glutamate required for cell wall biosynthesis. In Agrobacterium fabrum (strain C58 / ATCC 33970) (Agrobacterium tumefaciens (strain C58)), this protein is Glutamate racemase.